The chain runs to 448 residues: Phosphoglucosamine mutase (448 aa).

The active-site Phosphoserine intermediate is serine 99. The Mg(2+) site is built by serine 99, aspartate 238, aspartate 240, and aspartate 242. Phosphoserine is present on serine 99.

It belongs to the phosphohexose mutase family. Mg(2+) is required as a cofactor. Post-translationally, activated by phosphorylation.

It catalyses the reaction alpha-D-glucosamine 1-phosphate = D-glucosamine 6-phosphate. Its function is as follows. Catalyzes the conversion of glucosamine-6-phosphate to glucosamine-1-phosphate. The polypeptide is Phosphoglucosamine mutase (Marinomonas sp. (strain MWYL1)).